Consider the following 295-residue polypeptide: MFFQDIIKNLNNFWSEEGCLIMQPYDTEKGAGTMNPHTFLRAIGPEPWSVAYTEPCRRPADGRFGDNPNRAQHYFQYQVIIKPSPEGIQEKYLTSLDSLGINPRNHDIRFVEDNWESPTLGAWGVGWEVWLDGMEVTQFTYFQQCGGIDCKPIPIEITYGLERIAMFLQDKESIWDLNWNRDLKYSDIWLQFEKSQCSYNFKESSADNLRKLFEIYQSEAISLIEKKLTYPALDFVLKCSHNFNLLDARGVISVTDRAQYIEKIRKLAREVASSWIDERESLHFPLMKNSKEIFL.

Belongs to the class-II aminoacyl-tRNA synthetase family. In terms of assembly, tetramer of two alpha and two beta subunits.

The protein resides in the cytoplasm. It carries out the reaction tRNA(Gly) + glycine + ATP = glycyl-tRNA(Gly) + AMP + diphosphate. The protein is Glycine--tRNA ligase alpha subunit of Prochlorococcus marinus (strain MIT 9215).